A 184-amino-acid polypeptide reads, in one-letter code: UPF0398 protein BALH_1408 (184 aa).

Belongs to the UPF0398 family.

The polypeptide is UPF0398 protein BALH_1408 (Bacillus thuringiensis (strain Al Hakam)).